The sequence spans 361 residues: Putative agmatine deiminase (361 aa).

C354 (amidino-cysteine intermediate) is an active-site residue.

This sequence belongs to the agmatine deiminase family.

The enzyme catalyses agmatine + H2O = N-carbamoylputrescine + NH4(+). This is Putative agmatine deiminase from Streptococcus pneumoniae (strain ATCC BAA-255 / R6).